The primary structure comprises 182 residues: Caltractin ICL1b (182 aa).

Residues 1-31 (MSRRGQQPPPQQQQAPPQKNQAGKFNPAEFV) are disordered. EF-hand domains are found at residues 38 to 73 (EEVL…LGFE), 74 to 109 (AKNQ…RISE), 111 to 146 (DSKA…LGET), and 147 to 182 (MDDS…KTFA). D51, D53, T55, S57, E62, D87, D89, S91, Q93, and E98 together coordinate Ca(2+).

The protein belongs to the centrin family.

It localises to the cytoplasm. Its subcellular location is the cytoskeleton. Plays a fundamental role in microtubule organizing center structure and function. Component of the infraciliary lattice (ICL) and the ciliary basal bodies. The sequence is that of Caltractin ICL1b (Icl1b) from Paramecium tetraurelia.